We begin with the raw amino-acid sequence, 1209 residues long: Protein FAM83H (1209 aa).

A DUF1669 region spans residues 1 to 286 (MARRSQSSSQ…LFAQSEPLVP (286 aa)). Residues 1–286 (MARRSQSSSQ…LFAQSEPLVP (286 aa)) form a mediates interaction with CSNK1A1 and is required for FAM83H activity in keratin cytoskeleton organization region. Phosphoserine occurs at positions 512, 513, 515, 522, 639, and 660. Disordered regions lie at residues 512–545 (SSAS…NLGQ), 615–664 (RDLL…FRSR), and 735–760 (KGPA…VVSQ). The residue at position 749 (Thr-749) is a Phosphothreonine. Residues Ser-752, Ser-778, Ser-806, and Ser-871 each carry the phosphoserine modification. The segment at 829–1056 (AQGRSLSPQG…EERGSRVRLA (228 aa)) is disordered. At Thr-873 the chain carries Phosphothreonine. A phosphoserine mark is found at Ser-882, Ser-893, Ser-904, and Ser-915. Positions 915–942 (SPTSGFPNRRGSPTTGLMEQKGSPTSTY) are enriched in polar residues. At Thr-917 the chain carries Phosphothreonine. Ser-926 bears the Phosphoserine mark. Thr-928 is subject to Phosphothreonine. 8 positions are modified to phosphoserine: Ser-937, Ser-948, Ser-959, Ser-970, Ser-977, Ser-1035, Ser-1041, and Ser-1057. Thr-1072 bears the Phosphothreonine mark. Disordered stretches follow at residues 1076 to 1147 (LEQI…EERD) and 1174 to 1193 (EAGS…RDSK). Ser-1080, Ser-1098, and Ser-1177 each carry phosphoserine.

This sequence belongs to the FAM83 family. Directly interacts (via DUF1669) with casein kinase isoforms CSNK1A1, CSNK1A1L, CSNK1D and CSNK1E. Interaction with CSNK1A1 recruits CSNK1A1 to keratin filaments. Interacts with KRT18 and probably other keratins. Expressed in tooth follicle, eye, liver and kidney.

The protein resides in the cytoplasm. It localises to the cytoskeleton. Its function is as follows. May play a major role in the structural organization and calcification of developing enamel. May play a role in keratin cytoskeleton disassembly by recruiting CSNK1A1 to keratin filaments. Thereby, it may regulate epithelial cell migration. In Mus musculus (Mouse), this protein is Protein FAM83H.